The following is a 189-amino-acid chain: Peptidyl-tRNA hydrolase (189 aa).

Position 14 (Tyr-14) interacts with tRNA. Residue His-19 is the Proton acceptor of the active site. TRNA-binding residues include Tyr-64, Asn-66, and Asn-112.

Belongs to the PTH family. In terms of assembly, monomer.

The protein resides in the cytoplasm. The enzyme catalyses an N-acyl-L-alpha-aminoacyl-tRNA + H2O = an N-acyl-L-amino acid + a tRNA + H(+). In terms of biological role, hydrolyzes ribosome-free peptidyl-tRNAs (with 1 or more amino acids incorporated), which drop off the ribosome during protein synthesis, or as a result of ribosome stalling. Functionally, catalyzes the release of premature peptidyl moieties from peptidyl-tRNA molecules trapped in stalled 50S ribosomal subunits, and thus maintains levels of free tRNAs and 50S ribosomes. This chain is Peptidyl-tRNA hydrolase, found in Clostridium botulinum (strain Loch Maree / Type A3).